The following is a 332-amino-acid chain: Casein kinase I isoform 2 (332 aa).

A Protein kinase domain is found at 11-282 (FRIGQKIGSG…YLKRLFRELF (272 aa)). Residues 17-25 (IGSGSFGEI) and K40 each bind ATP. D133 serves as the catalytic Proton acceptor. The disordered stretch occupies residues 306 to 332 (EGRADQQQQQQQQQQRRGSEKEDEHPV). Over residues 311-320 (QQQQQQQQQQ) the composition is skewed to low complexity. A compositionally biased stretch (basic and acidic residues) spans 322–332 (RGSEKEDEHPV).

This sequence belongs to the protein kinase superfamily. Ser/Thr protein kinase family. Mg(2+) is required as a cofactor.

The catalysed reaction is L-seryl-[protein] + ATP = O-phospho-L-seryl-[protein] + ADP + H(+). It catalyses the reaction L-threonyl-[protein] + ATP = O-phospho-L-threonyl-[protein] + ADP + H(+). Functionally, serine/threonine protein kinase. May phosphorylate ZC3H11 during unstressed conditions, leading to proteasome-dependent degradation of ZC3H11. This Trypanosoma brucei brucei protein is Casein kinase I isoform 2.